Here is a 57-residue protein sequence, read N- to C-terminus: MKVLYGILIIFILCSMFYLSQEVVIGQRCYRSPDCYSACKKLVGKATGKCTNGRCDC.

The N-terminal stretch at 1-20 (MKVLYGILIIFILCSMFYLS) is a signal peptide. Positions 21 to 22 (QE) are cleaved as a propeptide — removed by a carboxypeptidase. 3 disulfides stabilise this stretch: Cys-29/Cys-50, Cys-35/Cys-55, and Cys-39/Cys-57.

The protein belongs to the short scorpion toxin superfamily. Potassium channel inhibitor family. Alpha-KTx 04 subfamily. As to expression, expressed by the venom gland.

The protein resides in the secreted. Blocker for small-conductance calcium-activated potassium channels KCa2.2/KCNN2 (Kd=80 nM) and KCa2.3/KCNN3 (Kd=197 nM) and ERG1/Kv11.1/KCNH2 potassium channels (53% inhibition at 5 uM). Has also been shown to inhibit Kv1.1/KCNA1 and Nav1.7/SCN9A with a moderate potency, as well as Kv11.1/KCNH2/ERG1 and Kv1.2/KCNA2 with a low potency. This chain is Potassium channel toxin alpha-KTx 4.2, found in Tityus serrulatus (Brazilian scorpion).